A 125-amino-acid polypeptide reads, in one-letter code: Ribonuclease P protein component (125 aa).

This sequence belongs to the RnpA family. Consists of a catalytic RNA component (M1 or rnpB) and a protein subunit.

It catalyses the reaction Endonucleolytic cleavage of RNA, removing 5'-extranucleotides from tRNA precursor.. Functionally, RNaseP catalyzes the removal of the 5'-leader sequence from pre-tRNA to produce the mature 5'-terminus. It can also cleave other RNA substrates such as 4.5S RNA. The protein component plays an auxiliary but essential role in vivo by binding to the 5'-leader sequence and broadening the substrate specificity of the ribozyme. The sequence is that of Ribonuclease P protein component from Clostridium perfringens (strain ATCC 13124 / DSM 756 / JCM 1290 / NCIMB 6125 / NCTC 8237 / Type A).